A 518-amino-acid chain; its full sequence is Lysine--tRNA ligase (518 aa).

A disordered region spans residues 1–28 (MTEPTQPNAAQPDAARPNVAPEMDDNKI). Residues E428 and E435 each contribute to the Mg(2+) site.

Belongs to the class-II aminoacyl-tRNA synthetase family. Homodimer. It depends on Mg(2+) as a cofactor.

It localises to the cytoplasm. The enzyme catalyses tRNA(Lys) + L-lysine + ATP = L-lysyl-tRNA(Lys) + AMP + diphosphate. This chain is Lysine--tRNA ligase, found in Paraburkholderia phytofirmans (strain DSM 17436 / LMG 22146 / PsJN) (Burkholderia phytofirmans).